The primary structure comprises 132 residues: Thioredoxin H4-2 (132 aa).

The Thioredoxin domain maps to 18-130 (DFKGGNVHVI…LEKKVQALAD (113 aa)). Catalysis depends on nucleophile residues Cys-56 and Cys-59. Cysteines 56 and 59 form a disulfide.

This sequence belongs to the thioredoxin family. Plant H-type subfamily.

Its subcellular location is the cytoplasm. In terms of biological role, probable thiol-disulfide oxidoreductase that may be involved in the redox regulation of a number of cytosolic enzymes. In Oryza sativa subsp. japonica (Rice), this protein is Thioredoxin H4-2.